Reading from the N-terminus, the 100-residue chain is Large ribosomal subunit protein uL23 (100 aa).

It belongs to the universal ribosomal protein uL23 family. In terms of assembly, part of the 50S ribosomal subunit. Contacts protein L29, and trigger factor when it is bound to the ribosome.

Its function is as follows. One of the early assembly proteins it binds 23S rRNA. One of the proteins that surrounds the polypeptide exit tunnel on the outside of the ribosome. Forms the main docking site for trigger factor binding to the ribosome. The chain is Large ribosomal subunit protein uL23 from Mycolicibacterium smegmatis (strain ATCC 700084 / mc(2)155) (Mycobacterium smegmatis).